The chain runs to 350 residues: UDP-N-acetylenolpyruvoylglucosamine reductase (350 aa).

Positions 24 to 195 (HVEATARWLL…VAVEFNLPLL (172 aa)) constitute an FAD-binding PCMH-type domain. Arginine 172 is a catalytic residue. Serine 245 (proton donor) is an active-site residue. Glutamate 342 is an active-site residue.

This sequence belongs to the MurB family. It depends on FAD as a cofactor.

It is found in the cytoplasm. It carries out the reaction UDP-N-acetyl-alpha-D-muramate + NADP(+) = UDP-N-acetyl-3-O-(1-carboxyvinyl)-alpha-D-glucosamine + NADPH + H(+). The protein operates within cell wall biogenesis; peptidoglycan biosynthesis. Functionally, cell wall formation. In Xanthomonas oryzae pv. oryzae (strain PXO99A), this protein is UDP-N-acetylenolpyruvoylglucosamine reductase.